The following is a 402-amino-acid chain: Propionate kinase (402 aa).

Positions 11 and 18 each coordinate ATP. N11 contacts Mg(2+). R86 serves as a coordination point for substrate. Catalysis depends on D143, which acts as the Proton donor/acceptor. ATP-binding positions include H175, 203–207 (HLGNG), 278–280 (DLR), and 326–330 (GIGEN).

It belongs to the acetokinase family. TdcD subfamily. As to quaternary structure, homodimer. Mg(2+) serves as cofactor.

It catalyses the reaction propanoate + ATP = propanoyl phosphate + ADP. The protein operates within amino-acid degradation; L-threonine degradation via propanoate pathway; propanoate from L-threonine: step 4/4. Functionally, catalyzes the conversion of propionyl phosphate and ADP to propionate and ATP. The polypeptide is Propionate kinase (Enterobacter sp. (strain 638)).